Reading from the N-terminus, the 348-residue chain is Elongation factor Ts (348 aa).

The involved in Mg(2+) ion dislocation from EF-Tu stretch occupies residues 82 to 85 (TDFV).

The protein belongs to the EF-Ts family.

Its subcellular location is the cytoplasm. Associates with the EF-Tu.GDP complex and induces the exchange of GDP to GTP. It remains bound to the aminoacyl-tRNA.EF-Tu.GTP complex up to the GTP hydrolysis stage on the ribosome. This chain is Elongation factor Ts, found in Aliarcobacter butzleri (strain RM4018) (Arcobacter butzleri).